A 408-amino-acid chain; its full sequence is Glucose-1-phosphate adenylyltransferase (408 aa).

Alpha-D-glucose 1-phosphate-binding positions include Y100, G165, 180–181 (EK), and S198.

This sequence belongs to the bacterial/plant glucose-1-phosphate adenylyltransferase family. In terms of assembly, homotetramer.

It catalyses the reaction alpha-D-glucose 1-phosphate + ATP + H(+) = ADP-alpha-D-glucose + diphosphate. It functions in the pathway glycan biosynthesis; glycogen biosynthesis. In terms of biological role, involved in the biosynthesis of ADP-glucose, a building block required for the elongation reactions to produce glycogen. Catalyzes the reaction between ATP and alpha-D-glucose 1-phosphate (G1P) to produce pyrophosphate and ADP-Glc. This chain is Glucose-1-phosphate adenylyltransferase, found in Cutibacterium acnes (strain DSM 16379 / KPA171202) (Propionibacterium acnes).